The sequence spans 398 residues: O-methyltransferase hmp5 (398 aa).

S-adenosyl-L-methionine is bound by residues G233–G234, E261, and D283–F284. The active-site Proton acceptor is the H303.

It belongs to the class I-like SAM-binding methyltransferase superfamily. Cation-independent O-methyltransferase family.

It participates in secondary metabolite biosynthesis. Functionally, O-methyltransferase; part of the gene cluster that mediates the biosynthesis of hypothemycin, a resorcylic acid lactone (RAL) that irreversibly inhibits a subset of protein kinases with a conserved cysteine in the ATP binding site such as human ERK2. The first step is performed by both PKSs hmp3 and hmp8 and leads to the production of 7',8'-dehydrozearalenol (DHZ). The highly reducing PKS hpm8 synthesizes the reduced hexaketide (7S,11S,2E,8E)-7,11-dihydroxy-dodeca-2,8-dienoate, which is transferred downstream to the non-reducing PKS hpm3. Hpm3 then extends the reduced hexaketide to a nonaketide, after which regioselective cyclization and macrolactonization affords DHZ. The next step is the conversion of DHZ into aigialomycin C and is performed by the O-methyltransferase hmp5, the FAD-binding monooxygenase hmp7, and the cytochrome P450 monooxygenase hmp1. The wide substrate tolerance of the hmp5 and hmp7 implies that the reactions from DHZ to aigialomycin C can occur in any order. The steps from aigialomycin C to hypothemycin are less well established. The FAD-linked oxidoreductase hmp9 presumably catalyzes oxidation of the C-6' hydroxyl to a ketone. The timing of this oxidation is important, since the resulting enone functional group is a Michael acceptor that can react spontaneously with glutathione, an abundant metabolite in fungal cells. The glutathione S-transferase hmp2 catalyzes cis-trans isomerization of the 7',8' double bond with equilibrium favoring the trans isomer. The hpm6-encoded transporter might preferentially pump hypothemycin out of the cell relative to the trans isomer aigialomycin A. The cis-to-trans isomerization may be coupled with C-4' hydroxylation, since all known hypothemycin analogs containing the enone functional group also have hydroxyl groups at both C-4' and C-5'. This chain is O-methyltransferase hmp5, found in Hypomyces subiculosus (Nectria subiculosa).